A 193-amino-acid polypeptide reads, in one-letter code: GDP-mannose pyrophosphatase (193 aa).

GDP-alpha-D-mannose-binding positions include 38–40 (IRE), Arg67, and 85–87 (AGL). Positions 43–180 (DRGDGATILL…RIKDGKTIML (138 aa)) constitute a Nudix hydrolase domain. Positions 85, 100, and 104 each coordinate Mg(2+). The Nudix box motif lies at 86-106 (GLLDDYSPEECIRNEAIEETG). GDP-alpha-D-mannose contacts are provided by residues Glu104, Glu127, 150 to 151 (DE), and Lys176. Glu151 provides a ligand contact to Mg(2+).

This sequence belongs to the Nudix hydrolase family. NudK subfamily. In terms of assembly, homodimer. The cofactor is Mg(2+).

The catalysed reaction is GDP-alpha-D-mannose + H2O = alpha-D-mannose 1-phosphate + GMP + 2 H(+). Functionally, nucleoside diphosphate sugar hydrolase that hydrolyzes GDP-mannose as its preferred substrate, yielding GMP and mannose-1-phosphate. The polypeptide is GDP-mannose pyrophosphatase (nudK) (Pectobacterium atrosepticum (strain SCRI 1043 / ATCC BAA-672) (Erwinia carotovora subsp. atroseptica)).